Consider the following 155-residue polypeptide: UPF0266 membrane protein lin0773 (155 aa).

3 helical membrane-spanning segments follow: residues 8-28, 46-66, and 70-90; these read IFLF…DAVI, RWDG…NTFF, and PFST…ICFF.

It belongs to the UPF0266 family.

The protein resides in the cell membrane. The polypeptide is UPF0266 membrane protein lin0773 (Listeria innocua serovar 6a (strain ATCC BAA-680 / CLIP 11262)).